The sequence spans 350 residues: Biotin synthase (350 aa).

The Radical SAM core domain maps to 41–268 (NEVQISRLLS…LSRVRLSAGR (228 aa)). [4Fe-4S] cluster is bound by residues Cys56, Cys60, and Cys63. [2Fe-2S] cluster-binding residues include Cys100, Cys131, Cys191, and Arg263.

Belongs to the radical SAM superfamily. Biotin synthase family. As to quaternary structure, homodimer. Requires [4Fe-4S] cluster as cofactor. [2Fe-2S] cluster serves as cofactor.

It carries out the reaction (4R,5S)-dethiobiotin + (sulfur carrier)-SH + 2 reduced [2Fe-2S]-[ferredoxin] + 2 S-adenosyl-L-methionine = (sulfur carrier)-H + biotin + 2 5'-deoxyadenosine + 2 L-methionine + 2 oxidized [2Fe-2S]-[ferredoxin]. Its pathway is cofactor biosynthesis; biotin biosynthesis; biotin from 7,8-diaminononanoate: step 2/2. Functionally, catalyzes the conversion of dethiobiotin (DTB) to biotin by the insertion of a sulfur atom into dethiobiotin via a radical-based mechanism. This chain is Biotin synthase, found in Shewanella baltica (strain OS223).